The following is a 461-amino-acid chain: Protein-serine O-palmitoleoyltransferase porcupine (461 aa).

At methionine 1–cysteine 17 the chain is on the cytoplasmic side. The helical transmembrane segment at leucine 18–alanine 38 threads the bilayer. The Extracellular segment spans residues cysteine 39 to histidine 66. A helical transmembrane segment spans residues phenylalanine 67–phenylalanine 87. Over leucine 88–arginine 95 the chain is Cytoplasmic. A helical transmembrane segment spans residues glycine 96 to aspartate 116. The Extracellular segment spans residues threonine 117 to proline 152. A helical membrane pass occupies residues valine 153–phenylalanine 173. Residues histidine 174 to alanine 198 are Cytoplasmic-facing. Cysteine 187 carries the S-palmitoyl cysteine lipid modification. A helical transmembrane segment spans residues leucine 199–isoleucine 219. The Extracellular portion of the chain corresponds to proline 220 to histidine 252. The chain crosses the membrane as a helical span at residues phenylalanine 253–phenylalanine 273. Residues threonine 274–serine 337 are Cytoplasmic-facing. The chain crosses the membrane as a helical span at residues alanine 338–threonine 358. Histidine 341 is an active-site residue. Residues tyrosine 359–arginine 396 lie on the Extracellular side of the membrane. Residues alanine 397 to phenylalanine 417 form a helical membrane-spanning segment. Residues aspartate 418–glycine 461 are Cytoplasmic-facing.

Belongs to the membrane-bound acyltransferase family. Porcupine subfamily. In terms of assembly, interacts with WNT1, WNT3, WNT3A, WNT4, WNT5A, WNT5B, WNT6, WNT7A and WNT7B. As to expression, isoform 1 is expressed in fetal brain, brain, amygdala, caudate nucleus, cerebellum, hippocampus, pituitary, thalamus, heart, skeletal muscle and testis. Isoform 4 is expressed in amygdala, corpus callosum, hippocampus, spinal cord, kidney, liver, lung, spleen, uterus, testis. Isoform 2 and isoform 3 are expressed in substantia negra, spinal cord, heart and lung.

It is found in the endoplasmic reticulum membrane. The catalysed reaction is [Wnt protein]-L-serine + (9Z)-hexadecenoyl-CoA = [Wnt protein]-O-(9Z)-hexadecenoyl-L-serine + CoA. Functionally, protein-serine O-palmitoleoyltransferase that acts as a key regulator of the Wnt signaling pathway by mediating the attachment of palmitoleate, a 16-carbon monounsaturated fatty acid (C16:1(9Z)), to Wnt proteins. Serine palmitoleoylation of WNT proteins is required for efficient binding to frizzled receptors. This Homo sapiens (Human) protein is Protein-serine O-palmitoleoyltransferase porcupine.